We begin with the raw amino-acid sequence, 203 residues long: Outer-membrane lipoprotein carrier protein (203 aa).

An N-terminal signal peptide occupies residues Met-1–Ala-21. The disordered stretch occupies residues Gln-178 to Lys-203.

This sequence belongs to the LolA family. Monomer.

The protein localises to the periplasm. Functionally, participates in the translocation of lipoproteins from the inner membrane to the outer membrane. Only forms a complex with a lipoprotein if the residue after the N-terminal Cys is not an aspartate (The Asp acts as a targeting signal to indicate that the lipoprotein should stay in the inner membrane). The polypeptide is Outer-membrane lipoprotein carrier protein (Salmonella paratyphi A (strain ATCC 9150 / SARB42)).